Consider the following 384-residue polypeptide: UDP-N-acetylglucosamine--N-acetylmuramyl-(pentapeptide) pyrophosphoryl-undecaprenol N-acetylglucosamine transferase (384 aa).

Residues T17–G19, N131, R172, S200, and Q301 contribute to the UDP-N-acetyl-alpha-D-glucosamine site.

It belongs to the glycosyltransferase 28 family. MurG subfamily.

The protein resides in the cell inner membrane. The catalysed reaction is di-trans,octa-cis-undecaprenyl diphospho-N-acetyl-alpha-D-muramoyl-L-alanyl-D-glutamyl-meso-2,6-diaminopimeloyl-D-alanyl-D-alanine + UDP-N-acetyl-alpha-D-glucosamine = di-trans,octa-cis-undecaprenyl diphospho-[N-acetyl-alpha-D-glucosaminyl-(1-&gt;4)]-N-acetyl-alpha-D-muramoyl-L-alanyl-D-glutamyl-meso-2,6-diaminopimeloyl-D-alanyl-D-alanine + UDP + H(+). It participates in cell wall biogenesis; peptidoglycan biosynthesis. In terms of biological role, cell wall formation. Catalyzes the transfer of a GlcNAc subunit on undecaprenyl-pyrophosphoryl-MurNAc-pentapeptide (lipid intermediate I) to form undecaprenyl-pyrophosphoryl-MurNAc-(pentapeptide)GlcNAc (lipid intermediate II). This Granulibacter bethesdensis (strain ATCC BAA-1260 / CGDNIH1) protein is UDP-N-acetylglucosamine--N-acetylmuramyl-(pentapeptide) pyrophosphoryl-undecaprenol N-acetylglucosamine transferase.